A 173-amino-acid polypeptide reads, in one-letter code: Photosystem I assembly protein Ycf3 (173 aa).

TPR repeat units follow at residues 35-68 (AYVY…EENS), 72-105 (SETL…NPNQ), and 120-153 (GRIA…NPGG).

This sequence belongs to the Ycf3 family.

It localises to the cellular thylakoid membrane. Essential for the assembly of the photosystem I (PSI) complex. May act as a chaperone-like factor to guide the assembly of the PSI subunits. This is Photosystem I assembly protein Ycf3 from Synechococcus sp. (strain CC9605).